A 254-amino-acid chain; its full sequence is Aspartate/glutamate leucyltransferase (254 aa).

The protein belongs to the R-transferase family. Bpt subfamily.

It localises to the cytoplasm. The catalysed reaction is N-terminal L-glutamyl-[protein] + L-leucyl-tRNA(Leu) = N-terminal L-leucyl-L-glutamyl-[protein] + tRNA(Leu) + H(+). It carries out the reaction N-terminal L-aspartyl-[protein] + L-leucyl-tRNA(Leu) = N-terminal L-leucyl-L-aspartyl-[protein] + tRNA(Leu) + H(+). Functionally, functions in the N-end rule pathway of protein degradation where it conjugates Leu from its aminoacyl-tRNA to the N-termini of proteins containing an N-terminal aspartate or glutamate. This is Aspartate/glutamate leucyltransferase from Xylella fastidiosa (strain M23).